Here is a 119-residue protein sequence, read N- to C-terminus: Protein yippee-like 2 (119 aa).

The 98-residue stretch at 19–116 (RTYSCIHCRA…IELAHMIKDN (98 aa)) folds into the Yippee domain. Zn(2+)-binding residues include Cys23, Cys26, Cys79, and Cys82.

This sequence belongs to the yippee family. As to quaternary structure, may interact with FAM168B.

The protein resides in the nucleus. Its subcellular location is the nucleolus. This chain is Protein yippee-like 2 (YPEL2), found in Chlorocebus aethiops (Green monkey).